Reading from the N-terminus, the 26-residue chain is Oxyopinin-3a (26 aa).

Expressed by the venom gland.

Its subcellular location is the secreted. Its function is as follows. May have cytolytic and antimicrobial activity. The chain is Oxyopinin-3a from Oxyopes takobius (Lynx spider).